Reading from the N-terminus, the 753-residue chain is 5-methyltetrahydropteroyltriglutamate--homocysteine methyltransferase (753 aa).

5-methyltetrahydropteroyltri-L-glutamate is bound by residues 17 to 20 and Lys-117; that span reads RELK. Residues 431–433 and Glu-484 each bind L-homocysteine; that span reads IGS. L-methionine contacts are provided by residues 431-433 and Glu-484; that span reads IGS. 5-methyltetrahydropteroyltri-L-glutamate contacts are provided by residues 515–516 and Trp-561; that span reads RC. Asp-599 lines the L-homocysteine pocket. Asp-599 is an L-methionine binding site. A 5-methyltetrahydropteroyltri-L-glutamate-binding site is contributed by Glu-605. Residues His-641, Cys-643, and Glu-665 each coordinate Zn(2+). Catalysis depends on His-694, which acts as the Proton donor. Cys-726 is a binding site for Zn(2+).

This sequence belongs to the vitamin-B12 independent methionine synthase family. The cofactor is Zn(2+).

The catalysed reaction is 5-methyltetrahydropteroyltri-L-glutamate + L-homocysteine = tetrahydropteroyltri-L-glutamate + L-methionine. It participates in amino-acid biosynthesis; L-methionine biosynthesis via de novo pathway; L-methionine from L-homocysteine (MetE route): step 1/1. Catalyzes the transfer of a methyl group from 5-methyltetrahydrofolate to homocysteine resulting in methionine formation. In Escherichia coli O7:K1 (strain IAI39 / ExPEC), this protein is 5-methyltetrahydropteroyltriglutamate--homocysteine methyltransferase.